The sequence spans 581 residues: 2-succinyl-5-enolpyruvyl-6-hydroxy-3-cyclohexene-1-carboxylate synthase (581 aa).

Belongs to the TPP enzyme family. MenD subfamily. In terms of assembly, homodimer. Requires Mg(2+) as cofactor. The cofactor is Mn(2+). It depends on thiamine diphosphate as a cofactor.

It catalyses the reaction isochorismate + 2-oxoglutarate + H(+) = 5-enolpyruvoyl-6-hydroxy-2-succinyl-cyclohex-3-ene-1-carboxylate + CO2. Its pathway is quinol/quinone metabolism; 1,4-dihydroxy-2-naphthoate biosynthesis; 1,4-dihydroxy-2-naphthoate from chorismate: step 2/7. The protein operates within cofactor biosynthesis; phylloquinone biosynthesis. Functionally, catalyzes the thiamine diphosphate-dependent decarboxylation of 2-oxoglutarate and the subsequent addition of the resulting succinic semialdehyde-thiamine pyrophosphate anion to isochorismate to yield 2-succinyl-5-enolpyruvyl-6-hydroxy-3-cyclohexene-1-carboxylate (SEPHCHC). This is 2-succinyl-5-enolpyruvyl-6-hydroxy-3-cyclohexene-1-carboxylate synthase from Gloeothece citriformis (strain PCC 7424) (Cyanothece sp. (strain PCC 7424)).